Here is a 442-residue protein sequence, read N- to C-terminus: Thymidine phosphorylase (442 aa).

This sequence belongs to the thymidine/pyrimidine-nucleoside phosphorylase family. In terms of assembly, homodimer.

The catalysed reaction is thymidine + phosphate = 2-deoxy-alpha-D-ribose 1-phosphate + thymine. It functions in the pathway pyrimidine metabolism; dTMP biosynthesis via salvage pathway; dTMP from thymine: step 1/2. Functionally, the enzymes which catalyze the reversible phosphorolysis of pyrimidine nucleosides are involved in the degradation of these compounds and in their utilization as carbon and energy sources, or in the rescue of pyrimidine bases for nucleotide synthesis. This is Thymidine phosphorylase from Pectobacterium atrosepticum (strain SCRI 1043 / ATCC BAA-672) (Erwinia carotovora subsp. atroseptica).